The following is a 245-amino-acid chain: Complement C1q subcomponent subunit A (245 aa).

A signal peptide spans 1-22 (MEGPRGWLVLCVLAISLASMVT). Basic and acidic residues predominate over residues 27–38 (RAPDGKKGEAGR). A disordered region spans residues 27-114 (RAPDGKKGEA…SPGNIKDQPR (88 aa)). In terms of domain architecture, Collagen-like spans 31 to 109 (GKKGEAGRPG…KGTKGSPGNI (79 aa)). Lysine 33 carries the post-translational modification 5-hydroxylysine. O-linked (Gal...) hydroxylysine glycosylation is present at lysine 33. 4-hydroxyproline is present on residues proline 39 and proline 45. At lysine 48 the chain carries 5-hydroxylysine. O-linked (Gal...) hydroxylysine glycosylation is present at lysine 48. A 4-hydroxyproline mark is found at proline 54 and proline 57. At lysine 67 the chain carries 5-hydroxylysine. Lysine 67 carries O-linked (Gal...) hydroxylysine glycosylation. 4-hydroxyproline occurs at positions 73, 79, and 85. The residue at position 100 (lysine 100) is a 5-hydroxylysine. O-linked (Gal...) hydroxylysine glycosylation is present at lysine 100. Residues 110–245 (KDQPRPAFSA…FSGFLIFPSA (136 aa)) enclose the C1q domain. Asparagine 146 carries N-linked (GlcNAc...) asparagine glycosylation. A disulfide bridge links cysteine 172 with cysteine 190. Glutamine 199 contacts Ca(2+).

As to quaternary structure, core component of the complement C1 complex, a calcium-dependent complex composed of 1 molecule of the C1Q subcomplex, 2 molecules of C1R and 2 molecules of C1S. The C1Q subcomplex is composed 18 subunits: 3 chains of C1QA, C1QB, and C1QC trimerize to form 6 collagen-like triple helices connected to six globular ligand-recognition modules (C1q domain). Interacts with CR1 (via Sushi 24 and Sushi 25 domains). Interacts (via C-terminus) with CD33; this interaction activates CD33 inhibitory motifs. In terms of assembly, (Microbial infection) Interacts with Staphylococcus aureus protein Cna; this interaction results in the inhibition of the classical complement pathway. Post-translationally, O-linked glycans are assumed to be the Glc-Gal disaccharides typically found as secondary modifications of hydroxylated lysines in collagen-like domains.

The protein resides in the secreted. It localises to the cell surface. Its activity is regulated as follows. The C1Q subcomplex is inhibited by sulfated molecules, such as triterpenoid sulfates, heparan sulfate, or chondroitin sulfates. Its function is as follows. Core component of the complement C1 complex, a multiprotein complex that initiates the classical pathway of the complement system, a cascade of proteins that leads to phagocytosis and breakdown of pathogens and signaling that strengthens the adaptive immune system. The classical complement pathway is initiated by the C1Q subcomplex of the C1 complex, which specifically binds IgG or IgM immunoglobulins complexed with antigens, forming antigen-antibody complexes on the surface of pathogens: C1QA, together with C1QB and C1QC, specifically recognizes and binds the Fc regions of IgG or IgM via its C1q domain. Immunoglobulin-binding activates the proenzyme C1R, which cleaves C1S, initiating the proteolytic cascade of the complement system. The C1Q subcomplex is activated by a hexamer of IgG complexed with antigens, while it is activated by a pentameric IgM. The C1Q subcomplex also recognizes and binds phosphatidylserine exposed on the surface of cells undergoing programmed cell death, possibly promoting activation of the complement system. The polypeptide is Complement C1q subcomponent subunit A (Homo sapiens (Human)).